The sequence spans 133 residues: Small ribosomal subunit protein uS8 (133 aa).

Belongs to the universal ribosomal protein uS8 family. As to quaternary structure, part of the 30S ribosomal subunit. Contacts proteins S5 and S12.

Functionally, one of the primary rRNA binding proteins, it binds directly to 16S rRNA central domain where it helps coordinate assembly of the platform of the 30S subunit. In Prochlorococcus marinus (strain MIT 9215), this protein is Small ribosomal subunit protein uS8.